The following is a 393-amino-acid chain: Protein TsgA (393 aa).

Helical transmembrane passes span W11–M31, F51–P71, F78–L98, A101–I121, L134–F154, W162–G182, I206–I226, T245–L265, I273–P293, A297–L317, F332–V352, and L361–V381.

Belongs to the major facilitator superfamily. TsgA family.

It is found in the cell inner membrane. The chain is Protein TsgA from Escherichia coli O7:K1 (strain IAI39 / ExPEC).